A 228-amino-acid chain; its full sequence is Ribulose-phosphate 3-epimerase (228 aa).

Ser9 is a substrate binding site. A divalent metal cation-binding residues include His34, Asp36, and His70. Asp36 acts as the Proton acceptor in catalysis. Residues His70, 146-149, 175-177, and 197-198 each bind substrate; these read GKGG, DGG, and GT. A divalent metal cation is bound at residue Asp175. Asp175 (proton donor) is an active-site residue.

It belongs to the ribulose-phosphate 3-epimerase family. Co(2+) serves as cofactor. It depends on Fe(2+) as a cofactor. Mn(2+) is required as a cofactor. Requires Zn(2+) as cofactor.

The catalysed reaction is D-ribulose 5-phosphate = D-xylulose 5-phosphate. It functions in the pathway carbohydrate degradation; pentose phosphate pathway; D-xylulose 5-phosphate from D-ribulose 5-phosphate (non-oxidative stage): step 1/1. Catalyzes the reversible epimerization of D-ribulose 5-phosphate to D-xylulose 5-phosphate. The protein is Ribulose-phosphate 3-epimerase of Schizosaccharomyces pombe (strain 972 / ATCC 24843) (Fission yeast).